The primary structure comprises 295 residues: 4-hydroxy-tetrahydrodipicolinate synthase (295 aa).

Position 46 (Thr-46) interacts with pyruvate. Catalysis depends on Tyr-135, which acts as the Proton donor/acceptor. Lys-164 functions as the Schiff-base intermediate with substrate in the catalytic mechanism. Ile-205 serves as a coordination point for pyruvate.

This sequence belongs to the DapA family. In terms of assembly, homotetramer; dimer of dimers.

The protein resides in the cytoplasm. It catalyses the reaction L-aspartate 4-semialdehyde + pyruvate = (2S,4S)-4-hydroxy-2,3,4,5-tetrahydrodipicolinate + H2O + H(+). Its pathway is amino-acid biosynthesis; L-lysine biosynthesis via DAP pathway; (S)-tetrahydrodipicolinate from L-aspartate: step 3/4. Catalyzes the condensation of (S)-aspartate-beta-semialdehyde [(S)-ASA] and pyruvate to 4-hydroxy-tetrahydrodipicolinate (HTPA). This is 4-hydroxy-tetrahydrodipicolinate synthase from Wolinella succinogenes (strain ATCC 29543 / DSM 1740 / CCUG 13145 / JCM 31913 / LMG 7466 / NCTC 11488 / FDC 602W) (Vibrio succinogenes).